The following is a 714-amino-acid chain: Probable metal-nicotianamine transporter YSL5 (714 aa).

The disordered stretch occupies residues 17–44 (HELQETGFSPETEKVKNKNFEEDEEEED). Residues 27-36 (ETEKVKNKNF) show a composition bias toward basic and acidic residues. 13 helical membrane passes run 67-87 (AFVVSFMLSILFSFIVMKLNL), 90-110 (GIIPSLNVSAGLLGFFFVKTW), 135-155 (CVVASSGIAFSGGFGTYLFGM), 175-195 (LGWIIGFLFVVSFLGLFSVVP), 236-256 (VLGKFFSLSFFWSFFQWFFTG), 295-315 (IINISVLLGGILSWGIMWPLI), 340-360 (VFIAVAIILGDGLYNFCKVLS), 413-433 (IPTWFAVGGYITIAATSTAIL), 445-465 (ILVIYICAPVLAFCNAYGAGL), 477-497 (LAIFTIGAWAGSEHGGMLAGL), 531-551 (FVSQVIGTAMGCVVSPCVFWL), 593-613 (LVLCYAFFGVAILVNIVKDSL), and 631-651 (FFLGPYFAIDMCVGSLILFIW).

The protein belongs to the YSL (TC 2.A.67.2) family.

Its subcellular location is the membrane. In terms of biological role, may be involved in the transport of nicotianamine-chelated metals. This is Probable metal-nicotianamine transporter YSL5 (YSL5) from Arabidopsis thaliana (Mouse-ear cress).